A 387-amino-acid polypeptide reads, in one-letter code: MTANNNKKSHIDTRVIHAGQKPDPLTGAVMTPIYTASTYAQKSPGVHQGYEYSRSQNPTRFAYERCVADLESGQHGFAFASGMAATATILELLQPGDHVVVMDDVYGGSYRLFENVRKRSAGLSFSFVDFTDENKVREAVTAKTKMLWVESPSNPRLKIVDLAKIAEIAKEKNIIAVADNTFATPIIQRPLELGFDIVTHSATKYLNGHSDIIGGVAVVGDNKTLAEQLKYLQNAIGAIAAPFDSFMVLRGLKTLAIRMERHCENAMQLAQWLEKHPKVKRVYYPGLPSHPQHSIAKKQMRYFGGMISVELKCDLNETKKVLERCQLFTLAESLGGVESLIEHPAIMTHASIPQAERQKLGITDGFIRLSVGIEAITDLRHDLEAAL.

N6-(pyridoxal phosphate)lysine is present on Lys204.

Belongs to the trans-sulfuration enzymes family. As to quaternary structure, homotetramer. The cofactor is pyridoxal 5'-phosphate.

It localises to the cytoplasm. It catalyses the reaction L,L-cystathionine + H2O = L-homocysteine + pyruvate + NH4(+). The catalysed reaction is an S-substituted L-cysteine + H2O = a thiol + pyruvate + NH4(+). Its pathway is amino-acid biosynthesis; L-methionine biosynthesis via de novo pathway; L-homocysteine from L-cystathionine: step 1/1. Functionally, catalyzes the cleavage of cystathionine to homocysteine, pyruvate and ammonia during methionine biosynthesis. The sequence is that of Cystathionine beta-lyase (metC) from Coxiella burnetii (strain RSA 493 / Nine Mile phase I).